The following is a 143-amino-acid chain: MSFRGLNASSGMGVADHSKNTFLELKRKKVHRYVIFKIDEKKKEVVVEKTGGPAESFDEFAAALPENDCRYAVYDFDFVTSENCQKSKIFFIAWSPDSSRIRAKMLYATSKERFRRELDGVHYEIQATDPTEMDLEVLRERAH.

Residues 11-143 form the ADF-H domain; that stretch reads GMGVADHSKN…DLEVLRERAH (133 aa).

Belongs to the actin-binding proteins ADF family.

Functionally, actin-depolymerizing protein. Severs actin filaments (F-actin) and binds to actin monomers. In Vitis vinifera (Grape), this protein is Actin-depolymerizing factor.